The sequence spans 488 residues: Teichuronic acid biosynthesis protein TuaE (488 aa).

Transmembrane regions (helical) follow at residues 7–29, 35–57, 64–86, 91–110, 122–144, 154–173, 180–202, 222–244, 257–274, 279–298, 303–322, 354–376, 397–419, and 459–476; these read AVHT…GAIH, MQMA…ATAF, FMAV…AIHL, LFLY…FGMV, LQVK…SLLW, YLAL…MYVQ, IVYA…NHIT, PTSV…FFYI, AIGL…FATG, LLGI…PPVL, IWLS…SKIY, NAWH…SYYL, ILAN…LIWV, and LFFH…VNVL.

It is found in the cell membrane. It participates in cell wall biogenesis; teichuronic acid biosynthesis. In terms of biological role, might be involved in the polymerization of teichuronic acid repeating units after their translocation to the outer surface of the membrane. This chain is Teichuronic acid biosynthesis protein TuaE (tuaE), found in Bacillus subtilis (strain 168).